A 457-amino-acid chain; its full sequence is Gustatory and odorant receptor 24 (457 aa).

The Cytoplasmic portion of the chain corresponds to 1 to 115 (MSLYFNADTM…GGTAFVLASP (115 aa)). Residues 116 to 136 (SMTYCVLFFLLLTVYIAFILL) form a helical membrane-spanning segment. The Extracellular portion of the chain corresponds to 137 to 152 (NRIEIVRTLEGRFEES). Residues 153–173 (VIAYLFIVNILPILIIPLMWY) form a helical membrane-spanning segment. Over 174–209 (ESRKVVSVVNGWVDFETVYRETTGRALELRLRTKAQ) the chain is Cytoplasmic. The chain crosses the membrane as a helical span at residues 210–230 (VIAILLPILCSLSVAITHVTM). At 231-237 (VDFKLLQ) the chain is on the extracellular side. Residues 238–258 (VIPYCVLDTITYMMGGYWYMA) form a helical membrane-spanning segment. Residues 259–309 (CETLSITAKILAEDFQRALRHVGPAAKVSEYRSLWLRLSKLARDTGFSTCY) are Cytoplasmic-facing. The chain crosses the membrane as a helical span at residues 310 to 330 (TFTFICLYLFFIITLSIYGLM). Topologically, residues 331 to 341 (SQISDGFGVKD) are extracellular. Residues 342–362 (IGLAVTAFCSVGLLFYICDEA) traverse the membrane as a helical segment. Residues 363–421 (HYASFNVRTNFQKKLLMVELSWMNTDAQTEINMFLRATEMNPSSINLGGFFDVNRTLFK) lie on the Cytoplasmic side of the membrane. A helical transmembrane segment spans residues 422–442 (SLLATMVTYLVVLLQFQISIP). Over 443–457 (DEPSAMLMHSNSSHS) the chain is Extracellular. Residue asparagine 453 is glycosylated (N-linked (GlcNAc...) asparagine).

It belongs to the insect chemoreceptor superfamily. Gustatory receptor (GR) family. Gr21a subfamily. As to expression, carbon dioxide-responsive neurons coexpress GPRgr22 and GPRgr24 in the maxillary palp, at both larval and adult life stages.

The protein resides in the cell membrane. Functionally, gustatory receptor which mediates acceptance or avoidance behavior, depending on its substrates. GPRgr22 and GPRgr24 together are sufficient for olfactory carbon dioxide-chemosensation. This Anopheles gambiae (African malaria mosquito) protein is Gustatory and odorant receptor 24.